The chain runs to 354 residues: uncharacterized protein (354 aa).

The protein belongs to the band 7/mec-2 family.

It is found in the mitochondrion. This is an uncharacterized protein from Schizosaccharomyces pombe (strain 972 / ATCC 24843) (Fission yeast).